Here is a 101-residue protein sequence, read N- to C-terminus: Small ribosomal subunit protein uS14A (101 aa).

The interval 32–71 is disordered; that stretch reads RRPGTPEPERNRAVEELRRQPRDASATRVRNRDSVDGRPR. Composition is skewed to basic and acidic residues over residues 38–53 and 61–70; these read EPERNRAVEELRRQPR and RNRDSVDGRP.

Belongs to the universal ribosomal protein uS14 family. Part of the 30S ribosomal subunit. Contacts proteins S3 and S10.

Binds 16S rRNA, required for the assembly of 30S particles and may also be responsible for determining the conformation of the 16S rRNA at the A site. This Streptomyces griseus subsp. griseus (strain JCM 4626 / CBS 651.72 / NBRC 13350 / KCC S-0626 / ISP 5235) protein is Small ribosomal subunit protein uS14A.